The primary structure comprises 428 residues: Enolase (428 aa).

Gln-163 is a binding site for (2R)-2-phosphoglycerate. Glu-205 functions as the Proton donor in the catalytic mechanism. The Mg(2+) site is built by Asp-242, Glu-283, and Asp-310. Residues Lys-335, Arg-364, Ser-365, and Lys-386 each contribute to the (2R)-2-phosphoglycerate site. Residue Lys-335 is the Proton acceptor of the active site.

Belongs to the enolase family. It depends on Mg(2+) as a cofactor.

The protein localises to the cytoplasm. It is found in the secreted. The protein resides in the cell surface. The enzyme catalyses (2R)-2-phosphoglycerate = phosphoenolpyruvate + H2O. The protein operates within carbohydrate degradation; glycolysis; pyruvate from D-glyceraldehyde 3-phosphate: step 4/5. Its function is as follows. Catalyzes the reversible conversion of 2-phosphoglycerate (2-PG) into phosphoenolpyruvate (PEP). It is essential for the degradation of carbohydrates via glycolysis. The protein is Enolase of Saccharopolyspora erythraea (strain ATCC 11635 / DSM 40517 / JCM 4748 / NBRC 13426 / NCIMB 8594 / NRRL 2338).